Reading from the N-terminus, the 173-residue chain is MTARVCVARIGAAHGLRGEVRLWTFTEDPIAVTRYGSLSTKDGARQFEVTHAREVKDYLVATLTGVTTREEAERLNGTDLYVARDKLPATDEGEFYHADLIGLAAVDVAGKPLGTVAAIHNFGAGDIIEIAPAHGPTLMLPFTDAVVPTVDIAGGRVVIEMPGEIDGDTPDQA.

A PRC barrel domain is found at 92–165 (EGEFYHADLI…RVVIEMPGEI (74 aa)).

Belongs to the RimM family. As to quaternary structure, binds ribosomal protein uS19.

The protein resides in the cytoplasm. Its function is as follows. An accessory protein needed during the final step in the assembly of 30S ribosomal subunit, possibly for assembly of the head region. Essential for efficient processing of 16S rRNA. May be needed both before and after RbfA during the maturation of 16S rRNA. It has affinity for free ribosomal 30S subunits but not for 70S ribosomes. The polypeptide is Ribosome maturation factor RimM (Nitrobacter hamburgensis (strain DSM 10229 / NCIMB 13809 / X14)).